A 102-amino-acid chain; its full sequence is MVIGLSHYLTVSAILFTIGVFGIFLNRKNVIVILMSIELILLAVNINMVAFSAFLNDIVGQVFALFILTVAAAEAAIGLAILVVFYRNRGSIAVEDVNMMKG.

A run of 3 helical transmembrane segments spans residues Leu5–Leu25, Ile31–Phe51, and Leu65–Phe85.

Belongs to the complex I subunit 4L family. In terms of assembly, NDH-1 is composed of 14 different subunits. Subunits NuoA, H, J, K, L, M, N constitute the membrane sector of the complex.

The protein localises to the cell inner membrane. The catalysed reaction is a quinone + NADH + 5 H(+)(in) = a quinol + NAD(+) + 4 H(+)(out). NDH-1 shuttles electrons from NADH, via FMN and iron-sulfur (Fe-S) centers, to quinones in the respiratory chain. The immediate electron acceptor for the enzyme in this species is believed to be ubiquinone. Couples the redox reaction to proton translocation (for every two electrons transferred, four hydrogen ions are translocated across the cytoplasmic membrane), and thus conserves the redox energy in a proton gradient. This Agrobacterium fabrum (strain C58 / ATCC 33970) (Agrobacterium tumefaciens (strain C58)) protein is NADH-quinone oxidoreductase subunit K.